Reading from the N-terminus, the 467-residue chain is Probable tryptophanase (467 aa).

At Lys-263 the chain carries N6-(pyridoxal phosphate)lysine.

The protein belongs to the beta-eliminating lyase family. It depends on pyridoxal 5'-phosphate as a cofactor.

It catalyses the reaction L-tryptophan + H2O = indole + pyruvate + NH4(+). It participates in amino-acid degradation; L-tryptophan degradation via pyruvate pathway; indole and pyruvate from L-tryptophan: step 1/1. In Aeropyrum pernix (strain ATCC 700893 / DSM 11879 / JCM 9820 / NBRC 100138 / K1), this protein is Probable tryptophanase (tnaA).